The following is a 624-amino-acid chain: Actin-related protein 8 (624 aa).

Position 1 is an N-acetylmethionine (Met1). Positions 1-25 (MTQAEKGDAENGKEKGGEKEKEQRG) are enriched in basic and acidic residues. The disordered stretch occupies residues 1-29 (MTQAEKGDAENGKEKGGEKEKEQRGVKRP). Positions 55 and 56 each coordinate ATP. Ser132 is subject to Phosphoserine. 283–286 (DVGD) serves as a coordination point for ATP. Ser412 carries the phosphoserine modification. A disordered region spans residues 430-460 (SKQEQSAKATADRKSASKPIGFEGDLRGQSS).

Belongs to the actin family. ARP8 subfamily. As to quaternary structure, component of the chromatin remodeling INO80 complex; specifically part of a complex module associated with the DBINO domain of INO80. Exists as monomers and dimers, but the dimer is most probably the biologically relevant form required for stable interactions with histones that exploits the twofold symmetry of the nucleosome core.

It is found in the nucleus. Its subcellular location is the chromosome. Plays an important role in the functional organization of mitotic chromosomes. Exhibits low basal ATPase activity, and unable to polymerize. Functionally, proposed core component of the chromatin remodeling INO80 complex which is involved in transcriptional regulation, DNA replication and probably DNA repair. Required for the recruitment of INO80 (and probably the INO80 complex) to sites of DNA damage Strongly prefer nucleosomes and H3-H4 tetramers over H2A-H2B dimers, suggesting it may act as a nucleosome recognition module within the complex. This Ailuropoda melanoleuca (Giant panda) protein is Actin-related protein 8 (ACTR8).